The primary structure comprises 213 residues: Redox-sensing transcriptional repressor Rex (213 aa).

Residues 18-57 constitute a DNA-binding region (H-T-H motif); the sequence is LYYRIFKRFHAEKIERANSKQIAEAIGIDSATVRRDFSYF. 92 to 97 serves as a coordination point for NAD(+); the sequence is GIGNMG.

It belongs to the transcriptional regulatory Rex family. As to quaternary structure, homodimer.

It localises to the cytoplasm. In terms of biological role, modulates transcription in response to changes in cellular NADH/NAD(+) redox state. Binds to the promoter of the aldehyde-alcohol dehydrogenase adhE gene. Functions as a redox-dependent repressor of adhE expression. The protein is Redox-sensing transcriptional repressor Rex of Streptococcus pneumoniae serotype 19F (strain G54).